The chain runs to 871 residues: Nonsense-mediated mRNA decay factor SMG8 (871 aa).

The tract at residues 541-596 (LDDMELPESLQQSYTSSEDSSEDDDDFAIQTASSEDSLSGSDSYARPGSRRDEFES) is disordered. Residues 573–583 (SSEDSLSGSDS) are compositionally biased toward low complexity.

It belongs to the SMG8 family.

Involved in nonsense-mediated decay (NMD) of mRNAs containing premature stop codons. Probable component of kinase complex containing smg-1 and recruited to stalled ribosomes. The protein is Nonsense-mediated mRNA decay factor SMG8 (smg-8) of Caenorhabditis briggsae.